An 867-amino-acid polypeptide reads, in one-letter code: Probable alpha,alpha-trehalose-phosphate synthase [UDP-forming] 9 (867 aa).

Serine 5 carries the post-translational modification Phosphoserine. Threonine 32 carries the post-translational modification Phosphothreonine. Positions glutamate 59–arginine 546 are glycosyltransferase.

The protein in the N-terminal section; belongs to the glycosyltransferase 20 family. It in the C-terminal section; belongs to the trehalose phosphatase family.

The catalysed reaction is D-glucose 6-phosphate + UDP-alpha-D-glucose = alpha,alpha-trehalose 6-phosphate + UDP + H(+). The sequence is that of Probable alpha,alpha-trehalose-phosphate synthase [UDP-forming] 9 (TPS9) from Arabidopsis thaliana (Mouse-ear cress).